A 347-amino-acid chain; its full sequence is Protein O-mannose kinase (347 aa).

Topologically, residues 1–14 (MGGTAVGGVIGVRC) are cytoplasmic. The chain crosses the membrane as a helical; Signal-anchor for type II membrane protein span at residues 15–35 (GVPAVLLCLGALLCANVLLYF). Over 36 to 347 (YLDALYQNTN…SQSQRVRDML (312 aa)) the chain is Lumenal. One can recognise a Protein kinase domain in the interval 79–347 (VRRVKLIGQG…SQSQRVRDML (269 aa)).

This sequence belongs to the protein kinase superfamily. Ser/Thr protein kinase family. STKL subfamily.

It localises to the endoplasmic reticulum membrane. It catalyses the reaction 3-O-[beta-D-GalNAc-(1-&gt;3)-beta-D-GlcNAc-(1-&gt;4)-alpha-D-Man]-L-Thr-[protein] + ATP = 3-O-[beta-D-GalNAc-(1-&gt;3)-beta-D-GlcNAc-(1-&gt;4)-(O-6-P-alpha-D-Man)]-Thr-[protein] + ADP + H(+). Its function is as follows. Protein O-mannose kinase that specifically mediates phosphorylation at the 6-position of an O-mannose of the trisaccharide (N-acetylgalactosamine (GalNAc)-beta-1,3-N-acetylglucosamine (GlcNAc)-beta-1,4-mannose) to generate phosphorylated O-mannosyl trisaccharide (N-acetylgalactosamine-beta-1,3-N-acetylglucosamine-beta-1,4-(phosphate-6-)mannose). Phosphorylated O-mannosyl trisaccharide is a carbohydrate structure present in alpha-dystroglycan (dag1), which is required for binding laminin G-like domain-containing extracellular proteins with high affinity. Only shows kinase activity when the GalNAc-beta-3-GlcNAc-beta-terminus is linked to the 4-position of O-mannose, suggesting that this disaccharide serves as the substrate recognition motif. This is Protein O-mannose kinase (pomk) from Danio rerio (Zebrafish).